Reading from the N-terminus, the 651-residue chain is Beta-glucuronidase (651 aa).

The signal sequence occupies residues 1 to 22; that stretch reads MLRGPAAVWAALGPLLWACGLA. N-linked (GlcNAc...) asparagine glycans are attached at residues N172 and N419. The active-site Proton donor is E450. N-linked (GlcNAc...) asparagine glycosylation is present at N630.

Belongs to the glycosyl hydrolase 2 family. As to quaternary structure, homotetramer.

It is found in the lysosome. The catalysed reaction is a beta-D-glucuronoside + H2O = D-glucuronate + an alcohol. With respect to regulation, inhibited by L-aspartic acid. In terms of biological role, plays an important role in the degradation of dermatan and keratan sulfates. The protein is Beta-glucuronidase (GUSB) of Felis catus (Cat).